A 407-amino-acid chain; its full sequence is Frizzled/smoothened-like sans CRD protein J (407 aa).

Residues 1 to 23 (MKFLFSVILVIISFLGISKIVNG) form the signal peptide. At 24 to 89 (QIACPSPFLY…WNSFNKLVKQ (66 aa)) the chain is on the extracellular side. N-linked (GlcNAc...) asparagine glycosylation is present at N37. A helical transmembrane segment spans residues 90–110 (MGAVAFTCSAIIMIIYGPLMN). At 111-120 (RSFFKFDRHT) the chain is on the cytoplasmic side. A helical membrane pass occupies residues 121 to 141 (ITVFCFALSTFFIGVSDLMFA). The Extracellular portion of the chain corresponds to 142–169 (TNDVDMVCPESHRYARQTDKTCATNGVL). A helical transmembrane segment spans residues 170–190 (FQFGWLGSVMWFAFLSIDGFF). Over 191–199 (RASGKKMNK) the chain is Cytoplasmic. The chain crosses the membrane as a helical span at residues 200-220 (IAFAIVLASIWILNIVLSFAP). Residues 221–246 (MGGDQYGAYFVGQVNCWILVKNWQYA) are Extracellular-facing. Residues 247–267 (FFWAELIVSLAIGFVGICLTI) traverse the membrane as a helical segment. The Cytoplasmic segment spans residues 268-285 (YSLIRKTSDGNTLKHVTP). A helical transmembrane segment spans residues 286 to 306 (LILVFLLFCQYLYMIIFYGII). Residues 307-354 (NEKKDHYQNILAEQVGCIFNNALAKMKVPGIVYAGECTFNETITFSSQ) lie on the Extracellular side of the membrane. N346 carries an N-linked (GlcNAc...) asparagine glycan. A helical transmembrane segment spans residues 355-375 (YAFLFFVRLLGIEIFAFYLFS). Over 376-407 (KETLLLIKSSYIATMFGLGDKDAYDVELEETD) the chain is Cytoplasmic.

The protein belongs to the G-protein coupled receptor Fz/Smo family.

The protein resides in the membrane. The polypeptide is Frizzled/smoothened-like sans CRD protein J (fscJ) (Dictyostelium discoideum (Social amoeba)).